The following is a 61-amino-acid chain: Rubredoxin 3 (61 aa).

The Rubredoxin-like domain occupies 1–53; it reads MSSYRCPVCEYVYDESKGAPREGFPAGTPWDAVPDDWCCPDCGVREKLDFEPM. Fe cation-binding residues include Cys-6, Cys-9, Cys-39, and Cys-42.

It belongs to the rubredoxin family. Requires Fe(3+) as cofactor.

In terms of biological role, involved in the hydrocarbon hydroxylating system, which transfers electrons from NADH to rubredoxin reductase and then through rubredoxin to alkane 1 monooxygenase. In Rhodococcus erythropolis (Arthrobacter picolinophilus), this protein is Rubredoxin 3 (rubA3).